The primary structure comprises 444 residues: Na(+)-translocating NADH-quinone reductase subunit A (444 aa).

The protein belongs to the NqrA family. As to quaternary structure, composed of six subunits; NqrA, NqrB, NqrC, NqrD, NqrE and NqrF.

It catalyses the reaction a ubiquinone + n Na(+)(in) + NADH + H(+) = a ubiquinol + n Na(+)(out) + NAD(+). Functionally, NQR complex catalyzes the reduction of ubiquinone-1 to ubiquinol by two successive reactions, coupled with the transport of Na(+) ions from the cytoplasm to the periplasm. NqrA to NqrE are probably involved in the second step, the conversion of ubisemiquinone to ubiquinol. This chain is Na(+)-translocating NADH-quinone reductase subunit A, found in Shewanella frigidimarina (strain NCIMB 400).